Consider the following 248-residue polypeptide: Homeobox protein CHOX-CAD (248 aa).

The segment at residues 137-196 is a DNA-binding region (homeobox); the sequence is KDKYRVVYTDHQRLELEKEFHYSRYITIRRKAELAAALGLTERQVKIWFQNRRAKERKVN. Positions 192–248 are disordered; the sequence is ERKVNKKKLQQQSQPTSTTTPTPPAVGTPGPMGTLCSGSAPSLVSSSPLTIKEEFMP. 2 stretches are compositionally biased toward low complexity: residues 201 to 211 and 228 to 240; these read QQQSQPTSTTT and SGSA…SSPL.

The protein belongs to the Caudal homeobox family.

It localises to the nucleus. In terms of biological role, may play an important role during the early steps of organogenesis. This is Homeobox protein CHOX-CAD (CHOX-CAD1) from Gallus gallus (Chicken).